A 336-amino-acid chain; its full sequence is Pyridoxal 5'-phosphate synthase subunit PdxS (336 aa).

Asp-33 contacts D-ribose 5-phosphate. Lys-90 functions as the Schiff-base intermediate with D-ribose 5-phosphate in the catalytic mechanism. Gly-162 is a D-ribose 5-phosphate binding site. Position 174 (Arg-174) interacts with D-glyceraldehyde 3-phosphate. Residues Gly-260 and 281-282 (GS) each bind D-ribose 5-phosphate.

The protein belongs to the PdxS/SNZ family. In terms of assembly, in the presence of PdxT, forms a dodecamer of heterodimers.

It catalyses the reaction aldehydo-D-ribose 5-phosphate + D-glyceraldehyde 3-phosphate + L-glutamine = pyridoxal 5'-phosphate + L-glutamate + phosphate + 3 H2O + H(+). It participates in cofactor biosynthesis; pyridoxal 5'-phosphate biosynthesis. In terms of biological role, catalyzes the formation of pyridoxal 5'-phosphate from ribose 5-phosphate (RBP), glyceraldehyde 3-phosphate (G3P) and ammonia. The ammonia is provided by the PdxT subunit. Can also use ribulose 5-phosphate and dihydroxyacetone phosphate as substrates, resulting from enzyme-catalyzed isomerization of RBP and G3P, respectively. This is Pyridoxal 5'-phosphate synthase subunit PdxS from Picrophilus torridus (strain ATCC 700027 / DSM 9790 / JCM 10055 / NBRC 100828 / KAW 2/3).